The primary structure comprises 198 residues: FMN-dependent NADH:quinone oxidoreductase (198 aa).

Position 96–99 (96–99) interacts with FMN; sequence MYNF.

The protein belongs to the azoreductase type 1 family. Homodimer. FMN is required as a cofactor.

It catalyses the reaction 2 a quinone + NADH + H(+) = 2 a 1,4-benzosemiquinone + NAD(+). It carries out the reaction N,N-dimethyl-1,4-phenylenediamine + anthranilate + 2 NAD(+) = 2-(4-dimethylaminophenyl)diazenylbenzoate + 2 NADH + 2 H(+). In terms of biological role, quinone reductase that provides resistance to thiol-specific stress caused by electrophilic quinones. Its function is as follows. Also exhibits azoreductase activity. Catalyzes the reductive cleavage of the azo bond in aromatic azo compounds to the corresponding amines. The sequence is that of FMN-dependent NADH:quinone oxidoreductase from Burkholderia mallei (strain ATCC 23344).